A 312-amino-acid chain; its full sequence is Gamma-soluble NSF attachment protein (312 aa).

The interval 281-312 (KKKAAAPPQAKPEGTAAPAAEEEEDEYAGGLC) is disordered. The span at 285–299 (AAPPQAKPEGTAAPA) shows a compositional bias: low complexity. Positions 300–312 (AEEEEDEYAGGLC) are enriched in acidic residues.

This sequence belongs to the SNAP family. In terms of assembly, interacts with RAB11FIP5. Interacts with VTI1A.

Its subcellular location is the membrane. It is found in the golgi apparatus. Required for vesicular transport between the endoplasmic reticulum and the Golgi apparatus. This is Gamma-soluble NSF attachment protein from Bos taurus (Bovine).